The chain runs to 277 residues: uncharacterized protein (277 aa).

7 consecutive transmembrane segments (helical) span residues 23–43 (CIGG…TAFI), 61–81 (FLIY…IIGG), 117–137 (LVLL…FGIF), 144–164 (IIGA…VISL), 197–217 (YIIL…IVVL), 221–241 (IIDI…IIYI), and 243–263 (IKGI…VFSI).

The protein to M.jannaschii MJ1189.

It is found in the cell membrane. This is an uncharacterized protein from Methanocaldococcus jannaschii (strain ATCC 43067 / DSM 2661 / JAL-1 / JCM 10045 / NBRC 100440) (Methanococcus jannaschii).